The primary structure comprises 205 residues: CASP-like protein 3A1 (205 aa).

Over 1–39 the chain is Cytoplasmic; the sequence is MGIGMDSSTMSGPLVAHSGILDGDYEKRPAVCKMQMRFD. The chain crosses the membrane as a helical span at residues 40 to 60; it reads LANVGLRVLSLACSLVALVSM. The Extracellular segment spans residues 61–89; sequence ASNQESGVVTVFGFKLPVYSKWSYSDSFE. The chain crosses the membrane as a helical span at residues 90 to 110; that stretch reads FLVGASAAAAAHSLLQLLLCG. Residues 111 to 125 are Cytoplasmic-facing; it reads MKMVKRASTIPSRNH. A helical membrane pass occupies residues 126-146; it reads AWLLFAGDQVFAYGMLAAASA. Over 147–176 the chain is Extracellular; sequence AAGVTNLNRTGFRHSDLPNFCKPLHRFCDK. The N-linked (GlcNAc...) asparagine glycan is linked to N154. The helical transmembrane segment at 177-197 threads the bilayer; it reads AAISIVFAFISSLILGGSAVL. Residues 198 to 205 are Cytoplasmic-facing; that stretch reads DVFWLSKN.

Belongs to the Casparian strip membrane proteins (CASP) family. Homodimer and heterodimers.

The protein resides in the cell membrane. The chain is CASP-like protein 3A1 from Picea sitchensis (Sitka spruce).